Reading from the N-terminus, the 333-residue chain is Galactinol synthase 5 (333 aa).

Residue K103 is part of the active site. Mn(2+) is bound by residues D119, D121, and H257.

Belongs to the glycosyltransferase 8 family. Galactosyltransferase subfamily. The cofactor is a divalent metal cation.

The protein localises to the cytoplasm. It carries out the reaction myo-inositol + UDP-alpha-D-galactose = alpha-D-galactosyl-(1-&gt;3)-1D-myo-inositol + UDP + H(+). Galactinol synthase involved in the biosynthesis of raffinose family oligosaccharides (RFOs) that function as osmoprotectants. May promote plant stress tolerance. The protein is Galactinol synthase 5 (GOLS5) of Arabidopsis thaliana (Mouse-ear cress).